Here is a 150-residue protein sequence, read N- to C-terminus: Large ribosomal subunit protein bL9 (150 aa).

Belongs to the bacterial ribosomal protein bL9 family.

Binds to the 23S rRNA. The sequence is that of Large ribosomal subunit protein bL9 from Enterococcus faecalis (strain ATCC 700802 / V583).